We begin with the raw amino-acid sequence, 311 residues long: tRNA-cytidine(32) 2-sulfurtransferase (311 aa).

A PP-loop motif motif is present at residues 45-50 (SGGKDS). Residues Cys120, Cys123, and Cys211 each contribute to the [4Fe-4S] cluster site.

The protein belongs to the TtcA family. Homodimer. It depends on Mg(2+) as a cofactor. Requires [4Fe-4S] cluster as cofactor.

It is found in the cytoplasm. It catalyses the reaction cytidine(32) in tRNA + S-sulfanyl-L-cysteinyl-[cysteine desulfurase] + AH2 + ATP = 2-thiocytidine(32) in tRNA + L-cysteinyl-[cysteine desulfurase] + A + AMP + diphosphate + H(+). It participates in tRNA modification. In terms of biological role, catalyzes the ATP-dependent 2-thiolation of cytidine in position 32 of tRNA, to form 2-thiocytidine (s(2)C32). The sulfur atoms are provided by the cysteine/cysteine desulfurase (IscS) system. The sequence is that of tRNA-cytidine(32) 2-sulfurtransferase from Shewanella pealeana (strain ATCC 700345 / ANG-SQ1).